Reading from the N-terminus, the 1135-residue chain is Protocadherin-18 (1135 aa).

An N-terminal signal peptide occupies residues M1–G27. 6 consecutive Cadherin domains span residues K28–F137, S138–F246, E247–I354, P361–F465, Q466–V576, and R582–M688. The Extracellular segment spans residues K28–S699. N103 carries an N-linked (GlcNAc...) asparagine glycan. N-linked (GlcNAc...) asparagine glycosylation is found at N269, N420, N559, N583, and N641. Residues M700 to F720 form a helical membrane-spanning segment. The Cytoplasmic segment spans residues A721–S1135. Disordered stretches follow at residues L769–Q800, S869–R889, D942–S1003, and Y1023–T1046. The segment covering G791 to Q800 has biased composition (polar residues). Residues S869 to S878 show a composition bias toward basic and acidic residues. Residues I893–S1135 form an interaction with DAB1 region. Residues E1028–K1039 are compositionally biased toward basic and acidic residues.

In terms of assembly, interacts with DAB1. Expressed in all tissues, with highest expression in lung and ovary.

It localises to the cell membrane. Potential calcium-dependent cell-adhesion protein. The polypeptide is Protocadherin-18 (PCDH18) (Homo sapiens (Human)).